A 159-amino-acid chain; its full sequence is Cytochrome P450 monooxygenase aunB (159 aa).

Position 134 (Cys-134) interacts with heme.

It belongs to the cytochrome P450 family. Heme serves as cofactor.

It carries out the reaction 2 fonsecin B + NADPH + O2 + H(+) = aurasperone B + NADP(+) + 2 H2O. The enzyme catalyses 2 rubrofusarin B + NADPH + O2 + H(+) = aurasperone A + NADP(+) + 2 H2O. Its pathway is secondary metabolite biosynthesis. Functionally, cytochrome P450 monooxygenase; part of the gene cluster that mediates the biosynthesis of aurasperone B, a dimeric gamma-naphthopyrone. The first step in the biosynthesis of aurasperone B is the production of gamma-naphthopyrone precursor YWA1 by the non-reducing polyketide synthase albA, via condensation of one acetyl-CoA starter unit with 6 malonyl-CoA units. YWA1 is then methylated by aunE at position C-6 to yield foncesin which is further methylated at position C-8 by aunD to produce fonsecin B. A key enzyme in the biosynthetic pathway is the cytochrome P450 monooxygenase aunB which catalyzes the oxidative dimerization of fonsecin B to aurasperone B. AunB also catalyzes the oxidative dimerization of rubrofusarin B into aurasperone A. This chain is Cytochrome P450 monooxygenase aunB, found in Aspergillus niger (strain ATCC 1015 / CBS 113.46 / FGSC A1144 / LSHB Ac4 / NCTC 3858a / NRRL 328 / USDA 3528.7).